Consider the following 152-residue polypeptide: Large ribosomal subunit protein bL9 (152 aa).

Belongs to the bacterial ribosomal protein bL9 family.

Functionally, binds to the 23S rRNA. The protein is Large ribosomal subunit protein bL9 of Prochlorococcus marinus (strain MIT 9313).